We begin with the raw amino-acid sequence, 294 residues long: Bifunctional protein FolD (294 aa).

Residues 171–173, Ser196, and Ile237 each bind NADP(+); that span reads GRS.

The protein belongs to the tetrahydrofolate dehydrogenase/cyclohydrolase family. Homodimer.

It carries out the reaction (6R)-5,10-methylene-5,6,7,8-tetrahydrofolate + NADP(+) = (6R)-5,10-methenyltetrahydrofolate + NADPH. The catalysed reaction is (6R)-5,10-methenyltetrahydrofolate + H2O = (6R)-10-formyltetrahydrofolate + H(+). It functions in the pathway one-carbon metabolism; tetrahydrofolate interconversion. Catalyzes the oxidation of 5,10-methylenetetrahydrofolate to 5,10-methenyltetrahydrofolate and then the hydrolysis of 5,10-methenyltetrahydrofolate to 10-formyltetrahydrofolate. The polypeptide is Bifunctional protein FolD (Synechocystis sp. (strain ATCC 27184 / PCC 6803 / Kazusa)).